The following is a 221-amino-acid chain: GTP cyclohydrolase III (221 aa).

This sequence belongs to the archaeal-type GTP cyclohydrolase family.

The catalysed reaction is GTP + 3 H2O = 2-amino-5-formylamino-6-(5-phospho-D-ribosylamino)pyrimidin-4(3H)-one + 2 phosphate + 2 H(+). Functionally, catalyzes the formation of 2-amino-5-formylamino-6-ribofuranosylamino-4(3H)-pyrimidinone ribonucleotide monophosphate and inorganic phosphate from GTP. Also has an independent pyrophosphate phosphohydrolase activity. This Pyrobaculum calidifontis (strain DSM 21063 / JCM 11548 / VA1) protein is GTP cyclohydrolase III.